Consider the following 444-residue polypeptide: Transmembrane protein with metallophosphoesterase domain (444 aa).

Transmembrane regions (helical) follow at residues 7-27 (LSLG…MIVS), 43-63 (LFRL…SIYI), 87-107 (MVVA…IFLV), 114-134 (FSLV…FLCV), and 162-182 (LALR…VGLL). The a divalent metal cation site is built by Asp214, His216, Asp246, Asn277, His382, and His384.

The protein belongs to the metallophosphoesterase superfamily. LOC643853 family. It depends on a divalent metal cation as a cofactor.

The protein resides in the membrane. The sequence is that of Transmembrane protein with metallophosphoesterase domain (TMPPE) from Bos taurus (Bovine).